Consider the following 329-residue polypeptide: Centromere protein L (329 aa).

A phosphoserine mark is found at S40 and S54.

Belongs to the CENP-L/IML3 family. Component of the CENPA-CAD complex, composed of CENPI, CENPK, CENPL, CENPO, CENPP, CENPQ, CENPR and CENPS. The CENPA-CAD complex interacts with the CENPA-NAC complex, at least composed of CENPA, CENPC, CENPH, CENPM, CENPN, CENPT and CENPU.

It localises to the nucleus. The protein localises to the chromosome. The protein resides in the centromere. Component of the CENPA-CAD (nucleosome distal) complex, a complex recruited to centromeres which is involved in assembly of kinetochore proteins, mitotic progression and chromosome segregation. May be involved in incorporation of newly synthesized CENPA into centromeres via its interaction with the CENPA-NAC complex. In Mus musculus (Mouse), this protein is Centromere protein L (Cenpl).